Here is a 167-residue protein sequence, read N- to C-terminus: Small ribosomal subunit protein uS5 (167 aa).

In terms of domain architecture, S5 DRBM spans 12-75 (LEERVVTINR…EDAKKNMVLV (64 aa)).

This sequence belongs to the universal ribosomal protein uS5 family. As to quaternary structure, part of the 30S ribosomal subunit. Contacts proteins S4 and S8.

With S4 and S12 plays an important role in translational accuracy. In terms of biological role, located at the back of the 30S subunit body where it stabilizes the conformation of the head with respect to the body. The polypeptide is Small ribosomal subunit protein uS5 (Listeria monocytogenes serotype 4b (strain F2365)).